The sequence spans 356 residues: 1,2-phenylacetyl-CoA epoxidase, subunit E (356 aa).

The region spanning 2–106 (TTFHSLTVAK…MVPQGHFGYQ (105 aa)) is the FAD-binding FR-type domain. Positions 112 to 228 (QGRYLAIAAG…AAMMDDAETA (117 aa)) are oxidoreductase. A 2Fe-2S ferredoxin-type domain is found at 262 to 354 (QKVTVRQDGR…DVVVDFDAKG (93 aa)). Residues Cys-299, Cys-304, Cys-307, and Cys-337 each coordinate [2Fe-2S] cluster.

It in the N-terminal section; belongs to the FAD-binding oxidoreductase type 6 family. [2Fe-2S] cluster serves as cofactor. Requires FAD as cofactor.

It functions in the pathway aromatic compound metabolism; phenylacetate degradation. In terms of biological role, component of 1,2-phenylacetyl-CoA epoxidase multicomponent enzyme system which catalyzes the reduction of phenylacetyl-CoA (PA-CoA) to form 1,2-epoxyphenylacetyl-CoA. The subunit E is a reductase with a preference for NADPH and FAD, capable of reducing cytochrome c. In Escherichia coli (strain K12), this protein is 1,2-phenylacetyl-CoA epoxidase, subunit E (paaE).